Here is a 425-residue protein sequence, read N- to C-terminus: MDTIAIPALNRPVDATVEIPGSKSITNRALLVAALAQGDSTLENALFSEDSEYFAKCVEQLGIPITLHPHLAQIQVSGKGGDIPAKQADLFVGLAGTAARFITALVALGNGEYRLDGVPRMRERPMGDLVTVLQNSGITINFEGNSGFMPYTIYGQQFAGGHFRLKANQTSQQLSALLMIAPYAQQDTTIEVEGTLVSQSYVKMTCRLMADFGVDVTQTDDNQFHIKAGQRYQARHYTIEPDASNASYFFAAAAVTGGRVRVNHLTKQSCQGDILWLNVLEQMGCQVIEGADYTEVIGPEQLQGIDIDMNDMSDLVQTLGAIAPYASSPVIIRNVEHIRYKETERIRAVVTELRRLGVKVEEFADGMKIEPTPITPAAIETYHDHRMAMAFAVTGLKTPGIVIQDPGCTAKTFPDYFTRFFKMID.

Residues Lys-23, Ser-24, and Arg-28 each contribute to the 3-phosphoshikimate site. Lys-23 is a binding site for phosphoenolpyruvate. The phosphoenolpyruvate site is built by Gly-96 and Arg-124. 6 residues coordinate 3-phosphoshikimate: Thr-170, Ser-171, Gln-172, Ser-198, Asp-314, and Lys-341. Residue Gln-172 participates in phosphoenolpyruvate binding. The active-site Proton acceptor is Asp-314. Phosphoenolpyruvate is bound by residues Arg-345, Arg-386, and Lys-411.

The protein belongs to the EPSP synthase family. Monomer.

The protein resides in the cytoplasm. It catalyses the reaction 3-phosphoshikimate + phosphoenolpyruvate = 5-O-(1-carboxyvinyl)-3-phosphoshikimate + phosphate. Its pathway is metabolic intermediate biosynthesis; chorismate biosynthesis; chorismate from D-erythrose 4-phosphate and phosphoenolpyruvate: step 6/7. Catalyzes the transfer of the enolpyruvyl moiety of phosphoenolpyruvate (PEP) to the 5-hydroxyl of shikimate-3-phosphate (S3P) to produce enolpyruvyl shikimate-3-phosphate and inorganic phosphate. The chain is 3-phosphoshikimate 1-carboxyvinyltransferase from Nostoc sp. (strain PCC 7120 / SAG 25.82 / UTEX 2576).